The following is a 347-amino-acid chain: Olfactory receptor 6J1 (347 aa).

Residues 1-24 (MGNWTAAVTEFVLLGFSLSREVEL) are Extracellular-facing. Asparagine 3 carries N-linked (GlcNAc...) asparagine glycosylation. A helical membrane pass occupies residues 25–45 (LLLVLLLPTFLLTLLGNLLII). The Cytoplasmic segment spans residues 46-53 (STVLSCSR). The helical transmembrane segment at 54 to 74 (LHTPMYFFLCNLSILDILFTS) threads the bilayer. Residues 75–98 (VISPKVLANLGSRDKTISFAGCIT) lie on the Extracellular side of the membrane. Cysteine 96 and cysteine 188 are joined by a disulfide. A helical membrane pass occupies residues 99-119 (QCYFYFFLGTVEFLLLTVMSY). Residues 120-138 (DRYATICCPLRYTTIMRPS) are Cytoplasmic-facing. Residues 139-159 (VCIGTVVFSWVGGFLSVLFPT) form a helical membrane-spanning segment. Over 160–196 (ILISQLPFCGSNIINHFFCDSGPLLALACADTTAIEL) the chain is Extracellular. The helical transmembrane segment at 197–216 (MDFMLSSMVILCCIVLVAYS) threads the bilayer. Over 217-236 (YTYIILTIVRIPSASGRKKA) the chain is Cytoplasmic. The chain crosses the membrane as a helical span at residues 237-257 (FNTCASHLTIVIISSGITVFI). At 258 to 270 (YVTPSQKEYLEIN) the chain is on the extracellular side. A helical transmembrane segment spans residues 271–291 (KIPLVLSSVVTPFLNPFIYTL). Residues 292–347 (RNDTVQGVLRDVWVRVRGVFEKRMRAVLRSRLSSNKDHQGRACSSPPCVYSVKLQC) are Cytoplasmic-facing.

The protein belongs to the G-protein coupled receptor 1 family.

The protein localises to the cell membrane. Odorant receptor. The polypeptide is Olfactory receptor 6J1 (OR6J1) (Homo sapiens (Human)).